Here is a 1571-residue protein sequence, read N- to C-terminus: Pentafunctional AROM polypeptide 2 (1571 aa).

A 3-dehydroquinate synthase region spans residues 1–380 (MAEPTKISIL…YEPKASVVSN (380 aa)). Residues 44 to 46 (DTN), 81 to 84 (ENSK), 112 to 114 (GGV), and Asp117 each bind NAD(+). Arg128 lines the 7-phospho-2-dehydro-3-deoxy-D-arabino-heptonate pocket. 137-138 (TT) contacts NAD(+). 7-phospho-2-dehydro-3-deoxy-D-arabino-heptonate is bound by residues Asp144 and Lys150. Lys159 serves as a coordination point for NAD(+). Asn160 contacts 7-phospho-2-dehydro-3-deoxy-D-arabino-heptonate. NAD(+) is bound by residues 177-180 (FIDT) and Asn188. Glu192 lines the Zn(2+) pocket. Residues 192–195 (EVIK) and Lys246 contribute to the 7-phospho-2-dehydro-3-deoxy-D-arabino-heptonate site. The active-site Proton acceptor; for 3-dehydroquinate synthase activity is the Glu256. Residues 260–264 (RNLLN) and His267 each bind 7-phospho-2-dehydro-3-deoxy-D-arabino-heptonate. His267 contributes to the Zn(2+) binding site. Residue His271 is the Proton acceptor; for 3-dehydroquinate synthase activity of the active site. 2 residues coordinate 7-phospho-2-dehydro-3-deoxy-D-arabino-heptonate: His283 and Lys352. His283 contacts Zn(2+). An EPSP synthase region spans residues 393–838 (VIPGVPKNLN…WDALKQKFGV (446 aa)). The For EPSP synthase activity role is filled by Cys820. A shikimate kinase region spans residues 859–1051 (NASIIIIGMR…RKKHLSFFVS (193 aa)). Position 866–873 (866–873 (GMRGAGKT)) interacts with ATP. The tract at residues 1052–1273 (LTLPDLRESG…AAPGQLSAAE (222 aa)) is 3-dehydroquinase. The active-site Proton acceptor; for 3-dehydroquinate dehydratase activity is the His1175. Residue Lys1203 is the Schiff-base intermediate with substrate; for 3-dehydroquinate dehydratase activity of the active site. The shikimate dehydrogenase stretch occupies residues 1286 to 1571 (AKKFAVLGKP…NAVLGTNETK (286 aa)).

In the N-terminal section; belongs to the sugar phosphate cyclases superfamily. Dehydroquinate synthase family. The protein in the 2nd section; belongs to the EPSP synthase family. This sequence in the 3rd section; belongs to the shikimate kinase family. It in the 4th section; belongs to the type-I 3-dehydroquinase family. In the C-terminal section; belongs to the shikimate dehydrogenase family. Homodimer. Zn(2+) serves as cofactor.

Its subcellular location is the cytoplasm. The enzyme catalyses 7-phospho-2-dehydro-3-deoxy-D-arabino-heptonate = 3-dehydroquinate + phosphate. It carries out the reaction 3-dehydroquinate = 3-dehydroshikimate + H2O. It catalyses the reaction shikimate + NADP(+) = 3-dehydroshikimate + NADPH + H(+). The catalysed reaction is shikimate + ATP = 3-phosphoshikimate + ADP + H(+). The enzyme catalyses 3-phosphoshikimate + phosphoenolpyruvate = 5-O-(1-carboxyvinyl)-3-phosphoshikimate + phosphate. The protein operates within metabolic intermediate biosynthesis; chorismate biosynthesis; chorismate from D-erythrose 4-phosphate and phosphoenolpyruvate: step 2/7. It functions in the pathway metabolic intermediate biosynthesis; chorismate biosynthesis; chorismate from D-erythrose 4-phosphate and phosphoenolpyruvate: step 3/7. It participates in metabolic intermediate biosynthesis; chorismate biosynthesis; chorismate from D-erythrose 4-phosphate and phosphoenolpyruvate: step 4/7. Its pathway is metabolic intermediate biosynthesis; chorismate biosynthesis; chorismate from D-erythrose 4-phosphate and phosphoenolpyruvate: step 5/7. The protein operates within metabolic intermediate biosynthesis; chorismate biosynthesis; chorismate from D-erythrose 4-phosphate and phosphoenolpyruvate: step 6/7. Its function is as follows. The AROM polypeptide catalyzes 5 consecutive enzymatic reactions in prechorismate polyaromatic amino acid biosynthesis. The sequence is that of Pentafunctional AROM polypeptide 2 from Talaromyces marneffei (strain ATCC 18224 / CBS 334.59 / QM 7333) (Penicillium marneffei).